We begin with the raw amino-acid sequence, 156 residues long: 6,7-dimethyl-8-ribityllumazine synthase (156 aa).

5-amino-6-(D-ribitylamino)uracil-binding positions include F23, 57 to 59, and 81 to 83; these read AFE and AVI. 86-87 contributes to the (2S)-2-hydroxy-3-oxobutyl phosphate binding site; that stretch reads ST. The active-site Proton donor is H89. F114 lines the 5-amino-6-(D-ribitylamino)uracil pocket. R128 contacts (2S)-2-hydroxy-3-oxobutyl phosphate.

The protein belongs to the DMRL synthase family.

The enzyme catalyses (2S)-2-hydroxy-3-oxobutyl phosphate + 5-amino-6-(D-ribitylamino)uracil = 6,7-dimethyl-8-(1-D-ribityl)lumazine + phosphate + 2 H2O + H(+). Its pathway is cofactor biosynthesis; riboflavin biosynthesis; riboflavin from 2-hydroxy-3-oxobutyl phosphate and 5-amino-6-(D-ribitylamino)uracil: step 1/2. Functionally, catalyzes the formation of 6,7-dimethyl-8-ribityllumazine by condensation of 5-amino-6-(D-ribitylamino)uracil with 3,4-dihydroxy-2-butanone 4-phosphate. This is the penultimate step in the biosynthesis of riboflavin. This is 6,7-dimethyl-8-ribityllumazine synthase from Campylobacter lari (strain RM2100 / D67 / ATCC BAA-1060).